The chain runs to 612 residues: MACPF domain-containing protein NSL1 (612 aa).

Residues 5 to 338 (NFTRLDAHSA…PPIEELHQFL (334 aa)) enclose the MACPF domain.

It belongs to the complement C6/C7/C8/C9 (TC 1.C.39) family.

Functionally, negatively controls the salicylic acid (SA)-mediated pathway of programmed cell death in plant immunity. The polypeptide is MACPF domain-containing protein NSL1 (NSL1) (Arabidopsis thaliana (Mouse-ear cress)).